The primary structure comprises 653 residues: Fructose-1,6-bisphosphatase class 3 (653 aa).

Belongs to the FBPase class 3 family. It depends on Mn(2+) as a cofactor.

It carries out the reaction beta-D-fructose 1,6-bisphosphate + H2O = beta-D-fructose 6-phosphate + phosphate. The protein operates within carbohydrate biosynthesis; gluconeogenesis. This is Fructose-1,6-bisphosphatase class 3 from Listeria monocytogenes serotype 4b (strain CLIP80459).